A 981-amino-acid polypeptide reads, in one-letter code: Anoctamin-3 (981 aa).

The segment covering 1–22 has biased composition (polar residues); the sequence is MVHHSGSIQSFKQQKGMNISKS. The tract at residues 1–33 is disordered; sequence MVHHSGSIQSFKQQKGMNISKSEITKETSLKPS. At 1 to 403 the chain is on the cytoplasmic side; the sequence is MVHHSGSIQS…LYFAWLGWYT (403 aa). The helical transmembrane segment at 404–424 threads the bilayer; it reads GMLIPAAIVGLCVFFYGLFTM. Asn425, Asn448, and Asn455 each carry an N-linked (GlcNAc...) asparagine glycan. Residues 425–469 lie on the Extracellular side of the membrane; the sequence is NNSQVSQEICKATEVFMCPLCDKNCSLQRLNDSCIYAKVTYLFDN. Residues 470-490 traverse the membrane as a helical segment; the sequence is GGTVFFAIFMAIWATVFLEFW. At 491–550 the chain is on the cytoplasmic side; sequence KRRRSILTYTWDLIEWEEEEETLRPQFEAKYYKMEIVNPITGKPEPHQPSSDKVTRLLVS. Residues 551–571 traverse the membrane as a helical segment; the sequence is VSGIFFMISLVITAVFGVVVY. The Extracellular segment spans residues 572-592; it reads RLVVMEQFASFKWNFIKQYWQ. A helical membrane pass occupies residues 593–613; sequence FATSAAAVCINFIIIMLLNLA. Over 614-640 the chain is Cytoplasmic; it reads YEKIAYLLTNLEYPRTESEWENSFALK. Residues 641 to 661 form a helical membrane-spanning segment; it reads MFLFQFVNLNSSIFYIAFFLG. Topologically, residues 662–761 are extracellular; it reads RFVGHPGKYN…MDEYLEMVLQ (100 aa). A helical membrane pass occupies residues 762–782; it reads FGFTTIFVAAFPLAPLLALLN. Residues 783–810 are Cytoplasmic-facing; the sequence is NIIEIRLDAYKFVTQWRRPLPARATDIG. A helical membrane pass occupies residues 811-831; the sequence is IWLGILEGIGILAVITNAFVI. The Extracellular portion of the chain corresponds to 832 to 914; the sequence is AITSDYIPRF…QYWHILAARL (83 aa). Asn866 carries N-linked (GlcNAc...) asparagine glycosylation. Residues 915–935 traverse the membrane as a helical segment; it reads AFIIVFEHLVFGIKSFIAYLI. The Cytoplasmic segment spans residues 936–981; that stretch reads PDVPKGLHDRIRREKYLVQEMMYEAELEHLQQQRRKSGQPVHHEWP.

The protein belongs to the anoctamin family. Interacts with KCNT1/Slack. In terms of tissue distribution, highly expressed in the forebrain striatum.

It is found in the cell membrane. The enzyme catalyses a 1,2-diacyl-sn-glycero-3-phosphocholine(in) = a 1,2-diacyl-sn-glycero-3-phosphocholine(out). It catalyses the reaction a beta-D-galactosyl-(1&lt;-&gt;1')-N-acylsphing-4-enine(out) = a beta-D-galactosyl-(1&lt;-&gt;1')-N-acylsphing-4-enine(in). In terms of biological role, has calcium-dependent phospholipid scramblase activity; scrambles phosphatidylcholine and galactosylceramide. Seems to act as potassium channel regulator and may inhibit pain signaling; can facilitate KCNT1/Slack channel activity by promoting its full single-channel conductance at very low sodium concentrations and by increasing its sodium sensitivity. Does not exhibit calcium-activated chloride channel (CaCC) activity. The chain is Anoctamin-3 (ANO3) from Homo sapiens (Human).